A 136-amino-acid polypeptide reads, in one-letter code: Galectin-7 (136 aa).

The 131-residue stretch at 6-136 folds into the Galectin domain; it reads HKSSLPEGIR…DVQLDSVRIF (131 aa). An a beta-D-galactoside-binding site is contributed by 70-76; the sequence is WGREERG.

As to quaternary structure, monomer. In terms of tissue distribution, mainly expressed in stratified squamous epithelium.

It localises to the cytoplasm. The protein resides in the nucleus. It is found in the secreted. In terms of biological role, could be involved in cell-cell and/or cell-matrix interactions necessary for normal growth control. Pro-apoptotic protein that functions intracellularly upstream of JNK activation and cytochrome c release. This is Galectin-7 (LGALS7) from Homo sapiens (Human).